The following is a 338-amino-acid chain: Heat-inducible transcription repressor HrcA (338 aa).

Belongs to the HrcA family.

Its function is as follows. Negative regulator of class I heat shock genes (grpE-dnaK-dnaJ and groELS operons). Prevents heat-shock induction of these operons. This Bacillus anthracis (strain A0248) protein is Heat-inducible transcription repressor HrcA.